A 361-amino-acid chain; its full sequence is MTKGKGRNPGASGLDKHLKRKTHLERSQPKSRQHLGQLEKHKDHVLRAKKRKVKVRRLQEIKRAAAQRNPDEFNIGMTKAVMDVANGRMRQRRVRLVESDRKKDMQTTIEHNRRNVQYLEFKAQADQQRATELLNEEAAAALTSTAPQNKHIVFVNSEEEFRSFNPLKHFDVTPEMMRQHPAVRGRIRVLEKTVMPEEILMSGGHQIKSAAQKRKERREVQEKMRRSGADATPETRAAFVERLRAKKELKQYQFTDLLEEVKRESEATASSSKGAPGDDGEQEEAAAQDEVTRLLEWRREQERQAAIATARHVREVGQRIQRSKSLSALAKSIRKQSQGIKRQMEQRRESRFKPGATRRAR.

Disordered stretches follow at residues Met-1 to Lys-52, Leu-200 to Thr-235, Lys-262 to Leu-295, and Arg-311 to Arg-361. Over residues His-17–Gln-33 the composition is skewed to basic residues. Basic and acidic residues-rich tracts occupy residues Gln-37–Leu-46 and Arg-217–Gly-228. Residues Asp-278–Ala-287 show a composition bias toward acidic residues. Over residues Arg-342 to Phe-352 the composition is skewed to basic and acidic residues.

The protein belongs to the UTP11 family. As to quaternary structure, component of the ribosomal small subunit (SSU) processome.

The protein localises to the nucleus. It localises to the nucleolus. Functionally, involved in nucleolar processing of pre-18S ribosomal RNA. In Leishmania major, this protein is Probable U3 small nucleolar RNA-associated protein 11.